Reading from the N-terminus, the 236-residue chain is Uridylate kinase (236 aa).

K10–G13 contacts ATP. A UMP-binding site is contributed by G52. The ATP site is built by G53 and R57. UMP contacts are provided by residues D72 and T133–T140. ATP-binding residues include T160, Y166, and D169.

It belongs to the UMP kinase family. In terms of assembly, homohexamer.

It is found in the cytoplasm. The catalysed reaction is UMP + ATP = UDP + ADP. The protein operates within pyrimidine metabolism; CTP biosynthesis via de novo pathway; UDP from UMP (UMPK route): step 1/1. Its activity is regulated as follows. Inhibited by UTP. Functionally, catalyzes the reversible phosphorylation of UMP to UDP. The protein is Uridylate kinase of Parabacteroides distasonis (strain ATCC 8503 / DSM 20701 / CIP 104284 / JCM 5825 / NCTC 11152).